The chain runs to 138 residues: Acidic phospholipase A2 pgPLA 1b/pgPLA 2b (138 aa).

The signal sequence occupies residues 1-16 (MRTLWIMAVLLVGVKG). Disulfide bonds link Cys42–Cys131, Cys44–Cys60, Cys59–Cys111, Cys65–Cys138, Cys66–Cys104, Cys73–Cys97, and Cys91–Cys102. Residues Tyr43, Gly45, and Gly47 each contribute to the Ca(2+) site. Residue His63 is part of the active site. Ca(2+) is bound at residue Asp64. Asp105 is a catalytic residue.

Belongs to the phospholipase A2 family. Group II subfamily. D49 sub-subfamily. Ca(2+) is required as a cofactor. As to expression, expressed by the venom gland.

The protein localises to the secreted. The enzyme catalyses a 1,2-diacyl-sn-glycero-3-phosphocholine + H2O = a 1-acyl-sn-glycero-3-phosphocholine + a fatty acid + H(+). In terms of biological role, PLA2 catalyzes the calcium-dependent hydrolysis of the 2-acyl groups in 3-sn-phosphoglycerides. In Protobothrops flavoviridis (Habu), this protein is Acidic phospholipase A2 pgPLA 1b/pgPLA 2b.